Reading from the N-terminus, the 102-residue chain is Inner membrane protein YaiY (102 aa).

Over 1–24 (MADFTLSKSLFSGKYRNASSTPGN) the chain is Cytoplasmic. The helical transmembrane segment at 25–45 (IAYALFVLFCFWAGAQLLNLL) threads the bilayer. At 46 to 74 (VHAPGVYERLMQVQETGRPRVEIGLGVGT) the chain is on the periplasmic side. Residues 75–95 (IFGLIPFLVGCLIFAVVALWL) form a helical membrane-spanning segment. Residues 96-102 (HWRHRRQ) lie on the Cytoplasmic side of the membrane.

Its subcellular location is the cell inner membrane. This Escherichia coli O157:H7 protein is Inner membrane protein YaiY (yaiY).